The primary structure comprises 1366 residues: DNA-directed RNA polymerase subunit beta' (1366 aa).

Residues Met1–Lys20 show a composition bias toward basic residues. Residues Met1 to Phe37 form a disordered region. Residues Cys248, Cys315, Cys322, and Cys325 each coordinate Zn(2+). Positions Thr1292–Glu1366 are disordered. The span at Leu1354–Glu1366 shows a compositional bias: low complexity.

Belongs to the RNA polymerase beta' chain family. RpoC2 subfamily. In cyanobacteria the RNAP catalytic core is composed of 2 alpha, 1 beta, 1 beta', 1 gamma and 1 omega subunit. When a sigma factor is associated with the core the holoenzyme is formed, which can initiate transcription. Zn(2+) serves as cofactor.

It carries out the reaction RNA(n) + a ribonucleoside 5'-triphosphate = RNA(n+1) + diphosphate. DNA-dependent RNA polymerase catalyzes the transcription of DNA into RNA using the four ribonucleoside triphosphates as substrates. This is DNA-directed RNA polymerase subunit beta' from Prochlorococcus marinus (strain MIT 9215).